A 190-amino-acid polypeptide reads, in one-letter code: ADP-ribosylation factor-like protein 6 (190 aa).

Gly-2 carries N-myristoyl glycine lipidation. GTP-binding positions include 24 to 31, Thr-50, 69 to 73, Gly-72, 130 to 133, and Ala-164; these read GLDNSGKT, DMAGQ, and NKMD. Mg(2+) is bound by residues Thr-31 and Thr-50.

The protein belongs to the small GTPase superfamily. Arf family.

The protein localises to the cytoplasm. This Caenorhabditis briggsae protein is ADP-ribosylation factor-like protein 6.